The sequence spans 449 residues: Ribulose bisphosphate carboxylase large chain (449 aa).

Lysine 7 carries the N6,N6,N6-trimethyllysine modification. Positions 116 and 166 each coordinate substrate. Lysine 168 serves as the catalytic Proton acceptor. Lysine 170 lines the substrate pocket. Mg(2+)-binding residues include lysine 194, aspartate 196, and glutamate 197. At lysine 194 the chain carries N6-carboxylysine. Histidine 287 serves as the catalytic Proton acceptor. The substrate site is built by arginine 288, histidine 320, and serine 372.

This sequence belongs to the RuBisCO large chain family. Type I subfamily. Heterohexadecamer of 8 large chains and 8 small chains; disulfide-linked. The disulfide link is formed within the large subunit homodimers. Requires Mg(2+) as cofactor. In terms of processing, the disulfide bond which can form in the large chain dimeric partners within the hexadecamer appears to be associated with oxidative stress and protein turnover.

The protein localises to the plastid. It localises to the chloroplast. The enzyme catalyses 2 (2R)-3-phosphoglycerate + 2 H(+) = D-ribulose 1,5-bisphosphate + CO2 + H2O. It catalyses the reaction D-ribulose 1,5-bisphosphate + O2 = 2-phosphoglycolate + (2R)-3-phosphoglycerate + 2 H(+). Its function is as follows. RuBisCO catalyzes two reactions: the carboxylation of D-ribulose 1,5-bisphosphate, the primary event in carbon dioxide fixation, as well as the oxidative fragmentation of the pentose substrate in the photorespiration process. Both reactions occur simultaneously and in competition at the same active site. This chain is Ribulose bisphosphate carboxylase large chain, found in Liriope muscari (Big blue lilyturf).